A 292-amino-acid polypeptide reads, in one-letter code: Bifunctional protein FolD (292 aa).

Residues 169–171 (GRG), Thr196, and Val237 each bind NADP(+).

Belongs to the tetrahydrofolate dehydrogenase/cyclohydrolase family. In terms of assembly, homodimer.

The enzyme catalyses (6R)-5,10-methylene-5,6,7,8-tetrahydrofolate + NADP(+) = (6R)-5,10-methenyltetrahydrofolate + NADPH. It carries out the reaction (6R)-5,10-methenyltetrahydrofolate + H2O = (6R)-10-formyltetrahydrofolate + H(+). The protein operates within one-carbon metabolism; tetrahydrofolate interconversion. Catalyzes the oxidation of 5,10-methylenetetrahydrofolate to 5,10-methenyltetrahydrofolate and then the hydrolysis of 5,10-methenyltetrahydrofolate to 10-formyltetrahydrofolate. This chain is Bifunctional protein FolD, found in Bifidobacterium longum (strain NCC 2705).